Consider the following 662-residue polypeptide: UvrABC system protein B (662 aa).

In terms of domain architecture, Helicase ATP-binding spans 31 to 188 (DNIEGGEKAQ…NDLVDIQFER (158 aa)). Residue 44–51 (GATGTGKT) coordinates ATP. The Beta-hairpin motif lies at 97–120 (YYDYYQPEAYVPSSDTYIEKDSSV). Positions 435–601 (QIDDLLGEIN…TIKKEIRDLI (167 aa)) constitute a Helicase C-terminal domain. One can recognise a UVR domain in the interval 626–661 (KELVKKLEKQMQEAVEVLDFELAAQIRDMMLEVKAL).

Belongs to the UvrB family. In terms of assembly, forms a heterotetramer with UvrA during the search for lesions. Interacts with UvrC in an incision complex.

The protein localises to the cytoplasm. The UvrABC repair system catalyzes the recognition and processing of DNA lesions. A damage recognition complex composed of 2 UvrA and 2 UvrB subunits scans DNA for abnormalities. Upon binding of the UvrA(2)B(2) complex to a putative damaged site, the DNA wraps around one UvrB monomer. DNA wrap is dependent on ATP binding by UvrB and probably causes local melting of the DNA helix, facilitating insertion of UvrB beta-hairpin between the DNA strands. Then UvrB probes one DNA strand for the presence of a lesion. If a lesion is found the UvrA subunits dissociate and the UvrB-DNA preincision complex is formed. This complex is subsequently bound by UvrC and the second UvrB is released. If no lesion is found, the DNA wraps around the other UvrB subunit that will check the other stand for damage. The polypeptide is UvrABC system protein B (Streptococcus pneumoniae (strain Hungary19A-6)).